The sequence spans 521 residues: Medium/long-chain-fatty-acid--[acyl-carrier-protein] ligase MbtM (521 aa).

The protein belongs to the ATP-dependent AMP-binding enzyme family.

The catalysed reaction is a long-chain fatty acid + holo-[ACP] + ATP = a long-chain fatty acyl-[ACP] + AMP + diphosphate. The enzyme catalyses a medium-chain fatty acid + holo-[ACP] + ATP = a medium-chain fatty acyl-[ACP] + AMP + diphosphate. Its pathway is siderophore biosynthesis; mycobactin biosynthesis. Functionally, activates lipidic moieties required for mycobactin biosynthesis. Converts medium- to long-chain aliphatic fatty acids into acyl adenylate, which is further transferred on to the phosphopantetheine arm of the carrier protein MbtL. This Mycobacterium bovis (strain ATCC BAA-935 / AF2122/97) protein is Medium/long-chain-fatty-acid--[acyl-carrier-protein] ligase MbtM (mbtM).